The following is a 476-amino-acid chain: mRNA-capping enzyme subunit beta (476 aa).

Positions 1–133 are disordered; the sequence is MNVGSILNDE…KLKSTNKPRR (133 aa). Composition is skewed to basic and acidic residues over residues 51-67 and 105-114; these read LKTK…EHSN and HPIEQDKSEK. The segment covering 123-132 has biased composition (basic residues); it reads SKLKSTNKPR.

Belongs to the fungal TPase family. As to quaternary structure, heterodimer. The mRNA-capping enzyme is composed of two separate chains alpha and beta, respectively a mRNA guanylyltransferase and an mRNA 5'-triphosphate monophosphatase. Mg(2+) serves as cofactor.

It is found in the nucleus. The enzyme catalyses a 5'-end triphospho-ribonucleoside in mRNA + H2O = a 5'-end diphospho-ribonucleoside in mRNA + phosphate + H(+). In terms of biological role, first step of mRNA capping. Converts the 5'-triphosphate end of a nascent mRNA chain into a diphosphate end. This chain is mRNA-capping enzyme subunit beta (CET1), found in Debaryomyces hansenii (strain ATCC 36239 / CBS 767 / BCRC 21394 / JCM 1990 / NBRC 0083 / IGC 2968) (Yeast).